The primary structure comprises 104 residues: UPF0213 protein in VLF1-GP41 intergenic region (104 aa).

The GIY-YIG domain maps to 9–89 (KVWCVYILRQ…SKYFKLRLIK (81 aa)).

It belongs to the UPF0213 family.

The protein is UPF0213 protein in VLF1-GP41 intergenic region of Autographa californica nuclear polyhedrosis virus (AcMNPV).